Consider the following 523-residue polypeptide: Glucose-1-phosphate adenylyltransferase large subunit 1, chloroplastic/amyloplastic (523 aa).

Residues 1 to 49 constitute a chloroplast transit peptide; the sequence is MSSMQFSSVLPLEGKACVSPVRREGSACERLKIGDSSSIRHERASRRMC.

Belongs to the bacterial/plant glucose-1-phosphate adenylyltransferase family. In terms of assembly, heterotetramer. In terms of tissue distribution, starchy endosperm and roots.

The protein resides in the plastid. It is found in the chloroplast. Its subcellular location is the amyloplast. It catalyses the reaction alpha-D-glucose 1-phosphate + ATP + H(+) = ADP-alpha-D-glucose + diphosphate. The protein operates within glycan biosynthesis; starch biosynthesis. With respect to regulation, highly active without 3'phosphoglycerate, and is only slightly affected by the activator 3'phosphoglycerate and inhibitor orthophosphate. Its function is as follows. This protein plays a role in synthesis of starch. It catalyzes the synthesis of the activated glycosyl donor, ADP-glucose from Glc-1-P and ATP. The protein is Glucose-1-phosphate adenylyltransferase large subunit 1, chloroplastic/amyloplastic of Hordeum vulgare (Barley).